A 286-amino-acid polypeptide reads, in one-letter code: NADPH-dependent 7-cyano-7-deazaguanine reductase (286 aa).

88–90 (VES) provides a ligand contact to substrate. 90–91 (SK) contributes to the NADPH binding site. Residue C194 is the Thioimide intermediate of the active site. The Proton donor role is filled by D201. 233–234 (HE) is a binding site for substrate. Residue 262-263 (RG) coordinates NADPH.

This sequence belongs to the GTP cyclohydrolase I family. QueF type 2 subfamily. In terms of assembly, homodimer.

Its subcellular location is the cytoplasm. It carries out the reaction 7-aminomethyl-7-carbaguanine + 2 NADP(+) = 7-cyano-7-deazaguanine + 2 NADPH + 3 H(+). It functions in the pathway tRNA modification; tRNA-queuosine biosynthesis. In terms of biological role, catalyzes the NADPH-dependent reduction of 7-cyano-7-deazaguanine (preQ0) to 7-aminomethyl-7-deazaguanine (preQ1). The protein is NADPH-dependent 7-cyano-7-deazaguanine reductase of Colwellia psychrerythraea (strain 34H / ATCC BAA-681) (Vibrio psychroerythus).